A 246-amino-acid chain; its full sequence is Probable transcriptional regulatory protein WP1214 (246 aa).

A disordered region spans residues 1-22 (MAGHSQFSNIKHRKGAQDAKRS).

Belongs to the TACO1 family.

It localises to the cytoplasm. This is Probable transcriptional regulatory protein WP1214 from Wolbachia pipientis subsp. Culex pipiens (strain wPip).